A 606-amino-acid chain; its full sequence is Aspartate--tRNA(Asp/Asn) ligase (606 aa).

Glu-177 lines the L-aspartate pocket. Residues 201-204 (QIFK) form an aspartate region. An L-aspartate-binding site is contributed by Arg-223. ATP-binding positions include 223 to 225 (RDE) and Gln-232. Position 461 (His-461) interacts with L-aspartate. Glu-499 is a binding site for ATP. Arg-506 serves as a coordination point for L-aspartate. Position 551 to 554 (551 to 554 (GLDR)) interacts with ATP.

This sequence belongs to the class-II aminoacyl-tRNA synthetase family. Type 1 subfamily. In terms of assembly, homodimer.

It localises to the cytoplasm. The catalysed reaction is tRNA(Asx) + L-aspartate + ATP = L-aspartyl-tRNA(Asx) + AMP + diphosphate. In terms of biological role, aspartyl-tRNA synthetase with relaxed tRNA specificity since it is able to aspartylate not only its cognate tRNA(Asp) but also tRNA(Asn). Reaction proceeds in two steps: L-aspartate is first activated by ATP to form Asp-AMP and then transferred to the acceptor end of tRNA(Asp/Asn). The polypeptide is Aspartate--tRNA(Asp/Asn) ligase (Prochlorococcus marinus (strain MIT 9211)).